Here is a 419-residue protein sequence, read N- to C-terminus: Gamma-glutamyl phosphate reductase (419 aa).

It belongs to the gamma-glutamyl phosphate reductase family.

It localises to the cytoplasm. It catalyses the reaction L-glutamate 5-semialdehyde + phosphate + NADP(+) = L-glutamyl 5-phosphate + NADPH + H(+). The protein operates within amino-acid biosynthesis; L-proline biosynthesis; L-glutamate 5-semialdehyde from L-glutamate: step 2/2. Its function is as follows. Catalyzes the NADPH-dependent reduction of L-glutamate 5-phosphate into L-glutamate 5-semialdehyde and phosphate. The product spontaneously undergoes cyclization to form 1-pyrroline-5-carboxylate. This Ruthia magnifica subsp. Calyptogena magnifica protein is Gamma-glutamyl phosphate reductase.